A 640-amino-acid chain; its full sequence is Threonine--tRNA ligase (640 aa).

The region spanning 1–61 (MPIITLPDGS…DHDATLQIIT (61 aa)) is the TGS domain. Residues 242 to 533 (DHRKLGKRLD…LIEHYEGAFP (292 aa)) form a catalytic region. Zn(2+) contacts are provided by Cys-333, His-384, and His-510.

This sequence belongs to the class-II aminoacyl-tRNA synthetase family. In terms of assembly, homodimer. Zn(2+) serves as cofactor.

The protein resides in the cytoplasm. The enzyme catalyses tRNA(Thr) + L-threonine + ATP = L-threonyl-tRNA(Thr) + AMP + diphosphate + H(+). Its function is as follows. Catalyzes the attachment of threonine to tRNA(Thr) in a two-step reaction: L-threonine is first activated by ATP to form Thr-AMP and then transferred to the acceptor end of tRNA(Thr). Also edits incorrectly charged L-seryl-tRNA(Thr). This chain is Threonine--tRNA ligase, found in Azotobacter vinelandii (strain DJ / ATCC BAA-1303).